A 499-amino-acid polypeptide reads, in one-letter code: Probable cytosol aminopeptidase (499 aa).

Lysine 263 and aspartate 268 together coordinate Mn(2+). Residue lysine 275 is part of the active site. Mn(2+) is bound by residues aspartate 286, aspartate 345, and glutamate 347. Arginine 349 is a catalytic residue.

Belongs to the peptidase M17 family. It depends on Mn(2+) as a cofactor.

It localises to the cytoplasm. The enzyme catalyses Release of an N-terminal amino acid, Xaa-|-Yaa-, in which Xaa is preferably Leu, but may be other amino acids including Pro although not Arg or Lys, and Yaa may be Pro. Amino acid amides and methyl esters are also readily hydrolyzed, but rates on arylamides are exceedingly low.. It carries out the reaction Release of an N-terminal amino acid, preferentially leucine, but not glutamic or aspartic acids.. Functionally, presumably involved in the processing and regular turnover of intracellular proteins. Catalyzes the removal of unsubstituted N-terminal amino acids from various peptides. This chain is Probable cytosol aminopeptidase, found in Chlamydia trachomatis serovar A (strain ATCC VR-571B / DSM 19440 / HAR-13).